A 258-amino-acid chain; its full sequence is MAKRLDLKDVNIYYGKFHAVADVGLSVPPRNVTAFIGPSGCGKSTVLRSLNRMHEVTPGARVEGSILLDGEDIYGSGIDPVGVRKTIGMVFQRPNPFPTMSIKDNVVAGLKLQGERSKKRLDEVAERSLRGANLWTEVKDRLDKPGGGLSGGQQQRLCIARAIAVSPDVLLMDEPCSALDPISTLAIEDLITELKKDFTIVIVTHNMQQAARVSDQTAFFNLEATGKPGRLVEIDDTEKIFSNPTQKATEDYISGRFG.

One can recognise an ABC transporter domain in the interval 5–247; it reads LDLKDVNIYY…EKIFSNPTQK (243 aa). 37-44 contacts ATP; that stretch reads GPSGCGKS.

It belongs to the ABC transporter superfamily. Phosphate importer (TC 3.A.1.7) family. As to quaternary structure, the complex is composed of two ATP-binding proteins (PstB), two transmembrane proteins (PstC and PstA) and a solute-binding protein (PstS).

It is found in the cell membrane. The enzyme catalyses phosphate(out) + ATP + H2O = ADP + 2 phosphate(in) + H(+). Part of the ABC transporter complex PstSACB involved in phosphate import. Responsible for energy coupling to the transport system. This Rhodococcus jostii (strain RHA1) protein is Phosphate import ATP-binding protein PstB.